A 115-amino-acid polypeptide reads, in one-letter code: U3-lycotoxin-Ls1k (115 aa).

The signal sequence occupies residues Met1–Ala20. A propeptide spanning residues Glu21 to Arg44 is cleaved from the precursor. Cystine bridges form between Cys48/Cys63, Cys55/Cys72, Cys62/Cys87, and Cys74/Cys85.

The protein belongs to the neurotoxin 19 (CSTX) family. 01 subfamily. In terms of tissue distribution, expressed by the venom gland.

Its subcellular location is the secreted. The sequence is that of U3-lycotoxin-Ls1k from Lycosa singoriensis (Wolf spider).